We begin with the raw amino-acid sequence, 359 residues long: Alanine racemase (359 aa).

Lys-35 acts as the Proton acceptor; specific for D-alanine in catalysis. The residue at position 35 (Lys-35) is an N6-(pyridoxal phosphate)lysine. Arg-131 lines the substrate pocket. Tyr-253 acts as the Proton acceptor; specific for L-alanine in catalysis. Met-301 is a substrate binding site.

This sequence belongs to the alanine racemase family. Requires pyridoxal 5'-phosphate as cofactor.

It catalyses the reaction L-alanine = D-alanine. The protein operates within amino-acid biosynthesis; D-alanine biosynthesis; D-alanine from L-alanine: step 1/1. In terms of biological role, catalyzes the interconversion of L-alanine and D-alanine. May also act on other amino acids. This Laribacter hongkongensis (strain HLHK9) protein is Alanine racemase (alr).